A 62-amino-acid chain; its full sequence is Cecropin-D (62 aa).

Residues 1 to 22 (MNFTKILFFVVACVFAMRTVSA) form the signal peptide. The propeptide at 23-24 (AP) is removed by a dipeptidylpeptidase. K60 bears the Lysine amide mark.

This sequence belongs to the cecropin family.

It is found in the secreted. Cecropins have lytic and antibacterial activity against several Gram-positive and Gram-negative bacteria. In Hyalophora cecropia (Cecropia moth), this protein is Cecropin-D.